We begin with the raw amino-acid sequence, 108 residues long: Peptidyl-prolyl cis-trans isomerase FKBP1C (108 aa).

The 89-residue stretch at 20–108 folds into the PPIase FKBP-type domain; that stretch reads SQTCVMHYTG…VFDVELLKLE (89 aa).

Belongs to the FKBP-type PPIase family. FKBP1 subfamily.

The enzyme catalyses [protein]-peptidylproline (omega=180) = [protein]-peptidylproline (omega=0). Its function is as follows. Catalyzes the cis-trans isomerization of proline imidic peptide bonds in oligopeptides. The polypeptide is Peptidyl-prolyl cis-trans isomerase FKBP1C (Homo sapiens (Human)).